Reading from the N-terminus, the 131-residue chain is MFAVLKTGGKQYKVQAGDVLRVEKLACEAGDKIQFNDILMVGGDSVTVGAPFVAGAAVQAEVIAQIKGEKTIHYVKRRRKHSSQRTKGHRQQLTLLRVTDVLASGADASGVAAATGTADARRAAHNASAKE.

The segment at 111-131 (VAAATGTADARRAAHNASAKE) is disordered.

It belongs to the bacterial ribosomal protein bL21 family. In terms of assembly, part of the 50S ribosomal subunit. Contacts protein L20.

Its function is as follows. This protein binds to 23S rRNA in the presence of protein L20. The polypeptide is Large ribosomal subunit protein bL21 (Cereibacter sphaeroides (strain ATCC 17029 / ATH 2.4.9) (Rhodobacter sphaeroides)).